The chain runs to 134 residues: Beta-synuclein (134 aa).

2 tandem repeats follow at residues 20-30 and 31-41. A 4 X 11 AA tandem repeats of [EGS]-K-T-K-[EQ]-[GQ]-V-X(4) region spans residues 20–67; it reads EKTKQGVTEAAEKTKEGVLYVGSKTKEGVVQGVASVAEKTKEQASHLG. The stretch at 42–56 is one 3; approximate repeat; that stretch reads SKTKEGVVQGVASVA. Copy 4 of the repeat occupies 57 to 67; it reads EKTKEQASHLG. The disordered stretch occupies residues 97–134; the sequence is EVAQEAAEEPLIEPLMEPEGESYEEQPQEEYQEYEPEA. Positions 98–134 are enriched in acidic residues; sequence VAQEAAEEPLIEPLMEPEGESYEEQPQEEYQEYEPEA. The residue at position 118 (Ser118) is a Phosphoserine; by BARK1, CK2 and GRK5.

This sequence belongs to the synuclein family. Phosphorylated. Phosphorylation by G-protein coupled receptor kinases (GRK) is more efficient than phosphorylation by CK1, CK2 and CaM-kinase II. In terms of tissue distribution, specifically present in synapses around neurons but not in glial cells.

Its subcellular location is the cytoplasm. May be involved in neuronal plasticity. The chain is Beta-synuclein (SNCB) from Bos taurus (Bovine).